Consider the following 260-residue polypeptide: Ribosomal RNA small subunit methyltransferase G (260 aa).

Residues G94, F99, 117–119, 145–146, and R164 contribute to the S-adenosyl-L-methionine site; these read DSS and AE.

It belongs to the methyltransferase superfamily. RNA methyltransferase RsmG family.

It is found in the cytoplasm. Functionally, specifically methylates the N7 position of a guanine in 16S rRNA. The chain is Ribosomal RNA small subunit methyltransferase G from Synechococcus sp. (strain JA-3-3Ab) (Cyanobacteria bacterium Yellowstone A-Prime).